A 737-amino-acid polypeptide reads, in one-letter code: SANT and BTB domain regulator of class switch recombination (737 aa).

The 39-residue stretch at 21 to 59 (DMILYPLIGIPQTINWETVARLVPGLTPKECVKRFDELK) folds into the SANT domain. Residues 147–255 (MVIHVCDEAK…QCIQYCHKNM (109 aa)) form the BTB domain. A compositionally biased stretch (acidic residues) spans 555–576 (SEEEEYTTGSEVTEDEVGDEEE). Positions 555–618 (SEEEEYTTGS…TLEKSTSRDV (64 aa)) are disordered. Positions 580-595 (KQRKKEKPKKFTKPPK) are enriched in basic residues. Residues 604–615 (QKKEKTLEKSTS) show a composition bias toward basic and acidic residues.

The protein belongs to the KIAA1841 family. As to quaternary structure, homodimer. Interacts (via the BTB domain) with HDAC1 and NCOR2.

Functionally, negatively regulates class switch recombination or isotype switching in splenic B-cells. The chain is SANT and BTB domain regulator of class switch recombination from Rattus norvegicus (Rat).